We begin with the raw amino-acid sequence, 703 residues long: Phosphate acetyltransferase (703 aa).

A phosphate acetyltransferase region spans residues 377–703 (AFRYELIQKA…IQATQAREGA (327 aa)).

It in the N-terminal section; belongs to the CobB/CobQ family. In the C-terminal section; belongs to the phosphate acetyltransferase and butyryltransferase family.

Its subcellular location is the cytoplasm. The catalysed reaction is acetyl-CoA + phosphate = acetyl phosphate + CoA. Its pathway is metabolic intermediate biosynthesis; acetyl-CoA biosynthesis; acetyl-CoA from acetate: step 2/2. Involved in acetate metabolism. This Deinococcus geothermalis (strain DSM 11300 / CIP 105573 / AG-3a) protein is Phosphate acetyltransferase (pta).